The chain runs to 634 residues: uncharacterized protein (634 aa).

A signal peptide spans 1–40; the sequence is MWLQQRLKGLPGLLSSSWARRLLCLLGLLVLLLWFASSGA. The Extracellular segment spans residues 41 to 589; that stretch reads RRAAGGLHLP…DEHMAQQDPG (549 aa). Asparagine 363 carries N-linked (GlcNAc...) asparagine glycosylation. A helical transmembrane segment spans residues 590-610; sequence LPFLFWFSVASLITLFHLFLF. Topologically, residues 611–634 are cytoplasmic; that stretch reads KLIYNEYCGPGAKPLFRSKEDPSV.

The protein resides in the membrane. This is an uncharacterized protein from Mus musculus (Mouse).